Reading from the N-terminus, the 317-residue chain is Transaldolase (317 aa).

The active-site Schiff-base intermediate with substrate is Lys-125.

Belongs to the transaldolase family. Type 1 subfamily. Homodimer.

The protein localises to the cytoplasm. The enzyme catalyses D-sedoheptulose 7-phosphate + D-glyceraldehyde 3-phosphate = D-erythrose 4-phosphate + beta-D-fructose 6-phosphate. It participates in carbohydrate degradation; pentose phosphate pathway; D-glyceraldehyde 3-phosphate and beta-D-fructose 6-phosphate from D-ribose 5-phosphate and D-xylulose 5-phosphate (non-oxidative stage): step 2/3. Transaldolase is important for the balance of metabolites in the pentose-phosphate pathway. The polypeptide is Transaldolase (Delftia acidovorans (strain DSM 14801 / SPH-1)).